A 706-amino-acid polypeptide reads, in one-letter code: Cyclic nucleotide-gated ion channel 18 (706 aa).

The Cytoplasmic portion of the chain corresponds to 1-53; the sequence is MNKIRSLRCLLPETITSASTAASNRGSDGSQFSVLWRHQILDPDSNIVTYWNH. The helical transmembrane segment at 54–74 threads the bilayer; sequence VFLITSILALFLDPFYFYVPY. Residues 75-86 are Extracellular-facing; that stretch reads VGGPACLSIDIS. The helical transmembrane segment at 87–107 threads the bilayer; sequence LAATVTFFRTVADIFHLLHIF. Residues 108 to 142 lie on the Cytoplasmic side of the membrane; sequence MKFRTAFVARSSRVFGRGELVMDSREIAMRYLKTD. The helical transmembrane segment at 143-163 threads the bilayer; that stretch reads FLIDVAAMLPLPQLVIWLVIP. The Extracellular portion of the chain corresponds to 164-174; that stretch reads AATNGTANHAN. A helical membrane pass occupies residues 175–195; sequence STLALIVLVQYIPRSFIIFPL. Topologically, residues 196–217 are cytoplasmic; that stretch reads NQRIIKTTGFIAKTAWAGAAYN. A helical transmembrane segment spans residues 218-238; the sequence is LLLYILASHVLGAMWYLSSIG. The Extracellular segment spans residues 239-345; that stretch reads RQFSCWSNVC…ITTSVYLGET (107 aa). A helical transmembrane segment spans residues 346–366; it reads LFCITICIFGLILFTLLIGNM. At 367–706 the chain is on the cytoplasmic side; the sequence is QSSLQSMSVR…PDFSIDKEDV (340 aa). A nucleoside 3',5'-cyclic phosphate contacts are provided by residues 449–579 and Glu-520; that span reads FFSQ…AFRY. A calmodulin-binding region spans residues 565 to 580; it reads FKRLQSKKLQHAFRYY. An IQ domain is found at 585–614; the sequence is RAWGACFVQSAWRRYKRRKLAKELSLHESS. Positions 661–706 are disordered; it reads ANTRRGTNQKASSSSTGKKDGSSTSLKMPQLFKPDEPDFSIDKEDV. Positions 693-706 are enriched in basic and acidic residues; sequence KPDEPDFSIDKEDV.

Belongs to the cyclic nucleotide-gated cation channel (TC 1.A.1.5) family. In terms of assembly, homomultimer. Interacts with CPK32. Expressed in pollen grains. Not detected in leaves, roots or root hairs.

The protein localises to the cell membrane. It is found in the cytoplasmic vesicle membrane. Its function is as follows. Cyclic nucleotide-gated ion channel required for directional pollen tube growth into the transmitting tract. Acts as a Ca(2+)-permeable divalent cation-selective channel inhibited by either lanthanum or gadolinium. Regulated by CPK32 to mediate Ca(2+) transport across the plasma membrane in response to Ca(2+) oscillation. This Arabidopsis thaliana (Mouse-ear cress) protein is Cyclic nucleotide-gated ion channel 18.